Here is a 203-residue protein sequence, read N- to C-terminus: MSEFTKEHFATNVYYDRTFDRDAAKILPGEYYYTGKDMLIVTVLGSCVSACIRDRVTGVGGMNHFMLPDSGADADSPVSASARYGTYAMEVLINDLLKAGAKRENLEAKVFGGGAVLRGFIAMNVGERNAQFVRDFLKVEGIRIIAEDLNDIHPRKVYYFPRSGKVLVKKLKQLNNNTLVNREQDYANRLQSNNVAGDIELFS.

The protein belongs to the CheD family.

It carries out the reaction L-glutaminyl-[protein] + H2O = L-glutamyl-[protein] + NH4(+). Its function is as follows. Probably deamidates glutamine residues to glutamate on methyl-accepting chemotaxis receptors (MCPs), playing an important role in chemotaxis. This is Probable chemoreceptor glutamine deamidase CheD from Herminiimonas arsenicoxydans.